The primary structure comprises 158 residues: 6,7-dimethyl-8-ribityllumazine synthase (158 aa).

5-amino-6-(D-ribitylamino)uracil is bound by residues F24, 58 to 60 (AFE), and 82 to 84 (AVI). (2S)-2-hydroxy-3-oxobutyl phosphate is bound at residue 87–88 (GT). H90 (proton donor) is an active-site residue. F115 lines the 5-amino-6-(D-ribitylamino)uracil pocket. R129 contributes to the (2S)-2-hydroxy-3-oxobutyl phosphate binding site.

It belongs to the DMRL synthase family. Forms an icosahedral capsid composed of 60 subunits, arranged as a dodecamer of pentamers.

It catalyses the reaction (2S)-2-hydroxy-3-oxobutyl phosphate + 5-amino-6-(D-ribitylamino)uracil = 6,7-dimethyl-8-(1-D-ribityl)lumazine + phosphate + 2 H2O + H(+). Its pathway is cofactor biosynthesis; riboflavin biosynthesis; riboflavin from 2-hydroxy-3-oxobutyl phosphate and 5-amino-6-(D-ribitylamino)uracil: step 1/2. In terms of biological role, catalyzes the formation of 6,7-dimethyl-8-ribityllumazine by condensation of 5-amino-6-(D-ribitylamino)uracil with 3,4-dihydroxy-2-butanone 4-phosphate. This is the penultimate step in the biosynthesis of riboflavin. This Pseudomonas putida (strain GB-1) protein is 6,7-dimethyl-8-ribityllumazine synthase.